A 174-amino-acid chain; its full sequence is N5-carboxyaminoimidazole ribonucleotide mutase (174 aa).

Positions 16, 19, and 46 each coordinate substrate.

Belongs to the AIR carboxylase family. Class I subfamily.

It carries out the reaction 5-carboxyamino-1-(5-phospho-D-ribosyl)imidazole + H(+) = 5-amino-1-(5-phospho-D-ribosyl)imidazole-4-carboxylate. Its pathway is purine metabolism; IMP biosynthesis via de novo pathway; 5-amino-1-(5-phospho-D-ribosyl)imidazole-4-carboxylate from 5-amino-1-(5-phospho-D-ribosyl)imidazole (N5-CAIR route): step 2/2. Functionally, catalyzes the conversion of N5-carboxyaminoimidazole ribonucleotide (N5-CAIR) to 4-carboxy-5-aminoimidazole ribonucleotide (CAIR). This Mycobacterium tuberculosis (strain CDC 1551 / Oshkosh) protein is N5-carboxyaminoimidazole ribonucleotide mutase.